The primary structure comprises 465 residues: SET domain-containing protein 3 (465 aa).

In terms of domain architecture, SET spans 18 to 265 (DKVTVKWDKK…AREELLDSYG (248 aa)).

Belongs to the class V-like SAM-binding methyltransferase superfamily.

This Caenorhabditis elegans protein is SET domain-containing protein 3 (set-3).